Reading from the N-terminus, the 208-residue chain is Ribosomal RNA large subunit methyltransferase E (208 aa).

Residues glycine 63, tryptophan 65, aspartate 83, aspartate 99, and aspartate 124 each coordinate S-adenosyl-L-methionine. The active-site Proton acceptor is lysine 164.

Belongs to the class I-like SAM-binding methyltransferase superfamily. RNA methyltransferase RlmE family.

It is found in the cytoplasm. It catalyses the reaction uridine(2552) in 23S rRNA + S-adenosyl-L-methionine = 2'-O-methyluridine(2552) in 23S rRNA + S-adenosyl-L-homocysteine + H(+). In terms of biological role, specifically methylates the uridine in position 2552 of 23S rRNA at the 2'-O position of the ribose in the fully assembled 50S ribosomal subunit. In Alcanivorax borkumensis (strain ATCC 700651 / DSM 11573 / NCIMB 13689 / SK2), this protein is Ribosomal RNA large subunit methyltransferase E.